Consider the following 153-residue polypeptide: Probable trafficking protein particle complex subunit 2 (153 aa).

Belongs to the TRAPP small subunits family. Sedlin subfamily. Part of the multisubunit TRAPP (transport protein particle) complex.

The protein resides in the cytoplasm. It localises to the perinuclear region. It is found in the endoplasmic reticulum. The protein localises to the golgi apparatus. Its function is as follows. May play a role in vesicular transport from endoplasmic reticulum to Golgi. The sequence is that of Probable trafficking protein particle complex subunit 2 from Nematostella vectensis (Starlet sea anemone).